We begin with the raw amino-acid sequence, 511 residues long: uncharacterized protein (511 aa).

One can recognise a CoA carboxyltransferase N-terminal domain in the interval 2-254; that stretch reads LMDYEKERTE…NFQEKAPIHE (253 aa). Positions 2–506 are carboxyltransferase; the sequence is LMDYEKERTE…KEMTFTNRKH (505 aa). Positions 260–506 constitute a CoA carboxyltransferase C-terminal domain; sequence HFETPLADVI…KEMTFTNRKH (247 aa).

This sequence belongs to the AccD/PCCB family.

This is an uncharacterized protein from Bacillus subtilis (strain 168).